The sequence spans 622 residues: Leucine-rich repeat-containing protein 70 (622 aa).

Residues 1 to 31 (MCGLQFSLPCLRLFLVVTCYLLLLLHKEILG) form the signal peptide. Positions 32–60 (CSSVCQLCTGRQINCRNLGLSSIPKNFPE) constitute an LRRNT domain. LRR repeat units follow at residues 61-82 (STVF…ELTG), 85-106 (SLVA…AFVQ), 109-130 (HLYF…IFKG), 133-154 (NLRN…VFND), 157-178 (SVQY…TFVG), 181-202 (ALRI…GFQH), 205-226 (NLAC…AFEV), 229-250 (SLRR…AFKG), 253-274 (NLEY…GFSG), 277-298 (NLKH…TFSL), 301-322 (NLIY…TFEN), and 326-347 (SLKI…VLKP). Residue N215 is glycosylated (N-linked (GlcNAc...) asparagine). Residue N266 is glycosylated (N-linked (GlcNAc...) asparagine). Residues N331 and N400 are each glycosylated (N-linked (GlcNAc...) asparagine). An LRRCT domain is found at 359 to 406 (NPWECNCKLLGLRDWLASSAITLNIYCQNPPSMRGRALRYINITNCVT). A helical transmembrane segment spans residues 527–547 (AFDILLAFFILACVLIIFLIY).

As to expression, expressed at low levels in many tissues, including smooth muscle, brain, uterus, pancreas, cartilage, adipose, spleen and testis.

The protein localises to the membrane. Its function is as follows. Renders cells highly sensitive to the activation by cytokines and lipopolysaccharide (LPS). The protein is Leucine-rich repeat-containing protein 70 (LRRC70) of Homo sapiens (Human).